A 288-amino-acid chain; its full sequence is Sulfur carrier protein FdhD (288 aa).

Residue C122 is the Cysteine persulfide intermediate of the active site. Residue 268–273 (FVRGER) participates in Mo-bis(molybdopterin guanine dinucleotide) binding.

The protein belongs to the FdhD family.

The protein localises to the cytoplasm. In terms of biological role, required for formate dehydrogenase (FDH) activity. Acts as a sulfur carrier protein that transfers sulfur from IscS to the molybdenum cofactor prior to its insertion into FDH. The sequence is that of Sulfur carrier protein FdhD from Anaeromyxobacter sp. (strain K).